We begin with the raw amino-acid sequence, 142 residues long: Ribosome-binding factor A (142 aa).

The segment covering 120–130 (EVRRDIDHAPA) has biased composition (basic and acidic residues). The tract at residues 120 to 142 (EVRRDIDHAPAEDEFPTDGDDGQ) is disordered. The segment covering 131–142 (EDEFPTDGDDGQ) has biased composition (acidic residues).

It belongs to the RbfA family. Monomer. Binds 30S ribosomal subunits, but not 50S ribosomal subunits or 70S ribosomes.

It is found in the cytoplasm. One of several proteins that assist in the late maturation steps of the functional core of the 30S ribosomal subunit. Associates with free 30S ribosomal subunits (but not with 30S subunits that are part of 70S ribosomes or polysomes). Required for efficient processing of 16S rRNA. May interact with the 5'-terminal helix region of 16S rRNA. This Paramagnetospirillum magneticum (strain ATCC 700264 / AMB-1) (Magnetospirillum magneticum) protein is Ribosome-binding factor A.